A 361-amino-acid chain; its full sequence is Phospho-N-acetylmuramoyl-pentapeptide-transferase (361 aa).

Transmembrane regions (helical) follow at residues Pro10–Ile30, Leu40–Pro60, Gly84–Val104, Gly107–Ile127, Leu147–Ile167, Trp175–Ala195, Leu206–Met226, Gly232–Leu252, Val260–Leu280, Leu288–Phe308, and Val341–Pro361.

The protein belongs to the glycosyltransferase 4 family. MraY subfamily. Requires Mg(2+) as cofactor.

The protein localises to the cell inner membrane. The catalysed reaction is UDP-N-acetyl-alpha-D-muramoyl-L-alanyl-gamma-D-glutamyl-meso-2,6-diaminopimeloyl-D-alanyl-D-alanine + di-trans,octa-cis-undecaprenyl phosphate = di-trans,octa-cis-undecaprenyl diphospho-N-acetyl-alpha-D-muramoyl-L-alanyl-D-glutamyl-meso-2,6-diaminopimeloyl-D-alanyl-D-alanine + UMP. The protein operates within cell wall biogenesis; peptidoglycan biosynthesis. Its function is as follows. Catalyzes the initial step of the lipid cycle reactions in the biosynthesis of the cell wall peptidoglycan: transfers peptidoglycan precursor phospho-MurNAc-pentapeptide from UDP-MurNAc-pentapeptide onto the lipid carrier undecaprenyl phosphate, yielding undecaprenyl-pyrophosphoryl-MurNAc-pentapeptide, known as lipid I. This chain is Phospho-N-acetylmuramoyl-pentapeptide-transferase, found in Synechococcus sp. (strain RCC307).